Reading from the N-terminus, the 171-residue chain is uncharacterized protein (171 aa).

This is an uncharacterized protein from Escherichia coli O157:H7.